The chain runs to 221 residues: Urease accessory protein UreF (221 aa).

This sequence belongs to the UreF family. UreD, UreF and UreG form a complex that acts as a GTP-hydrolysis-dependent molecular chaperone, activating the urease apoprotein by helping to assemble the nickel containing metallocenter of UreC. The UreE protein probably delivers the nickel.

The protein resides in the cytoplasm. Its function is as follows. Required for maturation of urease via the functional incorporation of the urease nickel metallocenter. The sequence is that of Urease accessory protein UreF from Aliivibrio fischeri (strain ATCC 700601 / ES114) (Vibrio fischeri).